The chain runs to 74 residues: Omega-conotoxin-like PuIIA (74 aa).

A signal peptide spans 1–22 (MKLTCVVIVAVLFLTACQLITA). The propeptide occupies 23–46 (ETYSRGEQKHRALSSTDKNSKLTR). 3 disulfides stabilise this stretch: Cys48–Cys62, Cys55–Cys66, and Cys61–Cys73.

This sequence belongs to the conotoxin O1 superfamily. In terms of tissue distribution, expressed by the venom duct.

The protein resides in the secreted. Omega-conotoxins act at presynaptic membranes, they bind and block voltage-gated calcium channels (Cav). In Conus pulicarius (Flea-bitten cone), this protein is Omega-conotoxin-like PuIIA.